Reading from the N-terminus, the 310-residue chain is Olfactory receptor 5P80 (310 aa).

Residues 1–25 (MEPGNYTVVTEVILLGFTEDAIIRA) lie on the Extracellular side of the membrane. An N-linked (GlcNAc...) asparagine glycan is attached at asparagine 5. Residues 26–46 (ILFIVFLIIYSVTLMGNASII) traverse the membrane as a helical segment. The Cytoplasmic segment spans residues 47-54 (MLIRRSPQ). A helical membrane pass occupies residues 55-75 (LHTPMYLLLSHLAFVDIGYSS). Over 76–99 (SVTPIMLKGFLRKETFILVSGCVA) the chain is Extracellular. A disulfide bond links cysteine 97 and cysteine 189. Residues 100 to 120 (QLCSVVTFGSTECFLLAAMAY) traverse the membrane as a helical segment. At 121–133 (DRYVAICSPLLYA) the chain is on the cytoplasmic side. Residues 134–154 (TQMSSTVCILLVGASYLGGCV) form a helical membrane-spanning segment. Topologically, residues 155-196 (NAWTFTGCLLNLSFCRPNKVNHFFCDYSPLLKISCSHDFSSE) are extracellular. Asparagine 165 carries an N-linked (GlcNAc...) asparagine glycan. Residues 197–217 (VIPAISSGSIIVVTVFIIALS) form a helical membrane-spanning segment. Over 218–237 (YVYILVSILKMRSTEGRQKA) the chain is Cytoplasmic. The helical transmembrane segment at 238–258 (FSTCTSHLTAVTLFYGTITFI) threads the bilayer. Residues 259 to 271 (YVMPKSSYSTDQN) are Extracellular-facing. Residues 272–292 (KVVSVFYTVVIPMLNPIIYSL) traverse the membrane as a helical segment. Residues 293-310 (RNKDVKEAMKKLMANTHH) are Cytoplasmic-facing.

This sequence belongs to the G-protein coupled receptor 1 family.

The protein resides in the cell membrane. Its function is as follows. Potential odorant receptor. In Mus musculus (Mouse), this protein is Olfactory receptor 5P80.